The following is a 240-amino-acid chain: Phosphatidylserine decarboxylase proenzyme (240 aa).

The Schiff-base intermediate with substrate; via pyruvic acid role is filled by Ser-209. The residue at position 209 (Ser-209) is a Pyruvic acid (Ser); by autocatalysis.

This sequence belongs to the phosphatidylserine decarboxylase family. PSD-A subfamily. In terms of assembly, heterodimer of a large membrane-associated beta subunit and a small pyruvoyl-containing alpha subunit. Pyruvate is required as a cofactor. Post-translationally, is synthesized initially as an inactive proenzyme. Formation of the active enzyme involves a self-maturation process in which the active site pyruvoyl group is generated from an internal serine residue via an autocatalytic post-translational modification. Two non-identical subunits are generated from the proenzyme in this reaction, and the pyruvate is formed at the N-terminus of the alpha chain, which is derived from the carboxyl end of the proenzyme. The post-translation cleavage follows an unusual pathway, termed non-hydrolytic serinolysis, in which the side chain hydroxyl group of the serine supplies its oxygen atom to form the C-terminus of the beta chain, while the remainder of the serine residue undergoes an oxidative deamination to produce ammonia and the pyruvoyl prosthetic group on the alpha chain.

The protein localises to the cell membrane. The catalysed reaction is a 1,2-diacyl-sn-glycero-3-phospho-L-serine + H(+) = a 1,2-diacyl-sn-glycero-3-phosphoethanolamine + CO2. Its pathway is phospholipid metabolism; phosphatidylethanolamine biosynthesis; phosphatidylethanolamine from CDP-diacylglycerol: step 2/2. Functionally, catalyzes the formation of phosphatidylethanolamine (PtdEtn) from phosphatidylserine (PtdSer). The chain is Phosphatidylserine decarboxylase proenzyme from Mycobacterium avium (strain 104).